The sequence spans 504 residues: D-alanine--D-alanyl carrier protein ligase (504 aa).

ATP is bound at residue 152 to 153 (TS). D197 is a binding site for D-alanine. Residue 292–297 (NTYGPT) participates in ATP binding. Residue V301 participates in D-alanine binding. ATP is bound by residues D383, 394–397 (YNGR), and K492. Residue K492 participates in D-alanine binding.

This sequence belongs to the ATP-dependent AMP-binding enzyme family. DltA subfamily.

The protein localises to the cytoplasm. The catalysed reaction is holo-[D-alanyl-carrier protein] + D-alanine + ATP = D-alanyl-[D-alanyl-carrier protein] + AMP + diphosphate. The protein operates within cell wall biogenesis; lipoteichoic acid biosynthesis. In terms of biological role, catalyzes the first step in the D-alanylation of lipoteichoic acid (LTA), the activation of D-alanine and its transfer onto the D-alanyl carrier protein (Dcp) DltC. In an ATP-dependent two-step reaction, forms a high energy D-alanyl-AMP intermediate, followed by transfer of the D-alanyl residue as a thiol ester to the phosphopantheinyl prosthetic group of the Dcp. D-alanylation of LTA plays an important role in modulating the properties of the cell wall in Gram-positive bacteria, influencing the net charge of the cell wall. In Bacillus cereus (strain Q1), this protein is D-alanine--D-alanyl carrier protein ligase.